The following is a 563-amino-acid chain: Probable ganciclovir kinase (563 aa).

Polar residues predominate over residues 1 to 16; sequence MDNGVETPQGQKTQPI. The disordered stretch occupies residues 1–33; it reads MDNGVETPQGQKTQPINLPPDRKRLRKHDGLGK. Residues 202–210 and K219 each bind ATP; that span reads LGVGAYGKV. The active-site Proton acceptor is the D314.

This sequence belongs to the protein kinase superfamily. Tyr protein kinase family. HCMV ganciclovir subfamily.

In terms of biological role, phosphorylates the antiviral nucleoside analog ganciclovir. The sequence is that of Probable ganciclovir kinase (U69) from Human herpesvirus 6B (strain Z29) (HHV-6 variant B).